The sequence spans 699 residues: Elongation factor G (699 aa).

Residues 8-283 (EHIRNIGICA…AVVDFLPSPI (276 aa)) enclose the tr-type G domain. Residues 17–24 (AHIDAGKT), 81–85 (DTPGH), and 135–138 (NKMD) contribute to the GTP site.

The protein belongs to the TRAFAC class translation factor GTPase superfamily. Classic translation factor GTPase family. EF-G/EF-2 subfamily.

Its subcellular location is the cytoplasm. In terms of biological role, catalyzes the GTP-dependent ribosomal translocation step during translation elongation. During this step, the ribosome changes from the pre-translocational (PRE) to the post-translocational (POST) state as the newly formed A-site-bound peptidyl-tRNA and P-site-bound deacylated tRNA move to the P and E sites, respectively. Catalyzes the coordinated movement of the two tRNA molecules, the mRNA and conformational changes in the ribosome. The sequence is that of Elongation factor G from Rickettsia sibirica (strain ATCC VR-151 / 246).